Reading from the N-terminus, the 695-residue chain is Protein MALE DISCOVERER 1 (695 aa).

The first 29 residues, 1-29 (MGCRWNPIGFQFSCFMFLIITLQSRSSLS), serve as a signal peptide directing secretion. The Extracellular portion of the chain corresponds to 30–340 (LESEGFVLLK…SKGFKDVWLY (311 aa)). Asn-56 and Asn-80 each carry an N-linked (GlcNAc...) asparagine glycan. LRR repeat units follow at residues 75 to 98 (KVQMLNLSGCSLGGTLAPELSQLS), 99 to 121 (ELRSLILSKNKLSGDIPNEFASF), 123 to 144 (KLEFLDLRDNNLNGVVPPELNK), and 147 to 168 (TPENLLLSGNKFAGFMTVKFLR). A glycan (N-linked (GlcNAc...) asparagine) is linked at Asn-247. Positions 302–325 (PPLIPPSSPPPLPTNNTIASDPPR) are disordered. Residues 303-314 (PLIPPSSPPPLP) show a composition bias toward pro residues. Asn-316 carries N-linked (GlcNAc...) asparagine glycosylation. The chain crosses the membrane as a helical span at residues 341-361 (VVIGVAAFVAMLIIVAVIFFF). Topologically, residues 362–695 (RKRAVKSIGP…ELEILSSEAT (334 aa)) are cytoplasmic. In terms of domain architecture, Protein kinase spans 363 to 668 (KRAVKSIGPW…YVVQQLKEVI (306 aa)). Ser-652 is modified (phosphoserine).

It belongs to the protein kinase superfamily. Ser/Thr protein kinase family. In terms of assembly, homodimer. Interacts with MIK1, MIK2 and LURE1.2. LURE1.2 enhances the heterodimerization of MDIS1 with MIK1 or MIK2. In terms of processing, phosphorylated by MIK1. In terms of tissue distribution, expressed in pollen tubes and seedlings.

It is found in the cell membrane. The protein resides in the endomembrane system. The catalysed reaction is L-seryl-[protein] + ATP = O-phospho-L-seryl-[protein] + ADP + H(+). It carries out the reaction L-threonyl-[protein] + ATP = O-phospho-L-threonyl-[protein] + ADP + H(+). Its function is as follows. Involved in the pollen tube perception of the female signal. The polypeptide is Protein MALE DISCOVERER 1 (Arabidopsis thaliana (Mouse-ear cress)).